Consider the following 1377-residue polypeptide: Hemoglobin-binding protease hbp autotransporter (1377 aa).

The signal sequence occupies residues 1-52 (MNRIYSLRYSAVARGFIAVSEFARKCVHKSVRRLCFPVLLLIPVLFSAGSLA). Residues 53–302 (GTVNNELGYQ…AVIPLDFIGQ (250 aa)) enclose the Peptidase S6 domain. Catalysis depends on charge relay system residues His125, Asp153, and Ser259. The Autotransporter domain maps to 1111-1377 (DINGEAGTWV…AINANIRYSF (267 aa)).

Cleaved to release the mature protein from the outer membrane.

It localises to the periplasm. The protein resides in the secreted. Its subcellular location is the cell surface. The protein localises to the cell outer membrane. Protease activity is inhibited by 3,4-dichloroisocoumarin. Functionally, interacts with hemoglobin, degrades it and subsequently binds the released heme. Could make heme accessible not only for E.coli, but also for B.fragilis during mixed intra-abdominal infections. Has a role in abscess formation. The chain is Hemoglobin-binding protease hbp autotransporter (hbp) from Escherichia coli.